The chain runs to 228 residues: Glycosylphosphatidylinositol-anchored high density lipoprotein-binding protein 1 (228 aa).

The signal sequence occupies residues 1-22 (MKALRAVLLILLLSGQPGSGWA). Residues 21–32 (WAQEDGDADPEP) form a disordered region. An important for LPL transport to the lumenal surface of endothelial cells region spans residues 24–48 (EDGDADPEPENYNYDDDDDEEEEEE). Acidic residues predominate over residues 24–49 (EDGDADPEPENYNYDDDDDEEEEEET). Tyr35 bears the Sulfotyrosine mark. The UPAR/Ly6 domain maps to 61-148 (LQCYFCQVLH…PWQNPQVQNP (88 aa)). 5 cysteine pairs are disulfide-bonded: Cys63-Cys88, Cys66-Cys75, Cys81-Cys109, Cys113-Cys129, and Cys130-Cys135. N-linked (GlcNAc...) asparagine glycosylation occurs at Asn76. Residues 102-108 (LTTYSMW) are important for interaction with LPL. Residues 145–200 (VQNPLGGRADSPLESGTRHPQGGKFSHPQVVKAAHPQSDGANLPKSGKANQPQGSG) form a disordered region. Gly198 is lipidated: GPI-anchor amidated glycine. A propeptide spans 199 to 228 (SGAGYPSGWTKFGNIALLLSFFTCLWASGA) (removed in mature form).

As to quaternary structure, mostly monomer, but also homodimer and homooligomer. Interacts with lipoprotein lipase (LPL). Interacts with high affinity with high-density lipoprotein (HDL). Interacts with chylomicrons. Interacts with APOA5. Post-translationally, glycosylation of Asn-76 is critical for cell surface localization. Sulfation of a Tyr in the N-terminal acidic region increases the affinity for LPL. In terms of tissue distribution, detected in fat tissue. Detected on the luminal surface of capillary endothelial cells in heart, skeletal muscle and brown adipose tissue (at protein level). Detected in heart and brown adipose tissue. Expressed at lower levels in lung and liver.

It is found in the apical cell membrane. The protein resides in the basolateral cell membrane. The protein localises to the cell membrane. In terms of biological role, mediates the transport of lipoprotein lipase LPL from the basolateral to the apical surface of endothelial cells in capillaries. Anchors LPL on the surface of endothelial cells in the lumen of blood capillaries. Thereby, plays an important role in lipolytic processing of chylomicrons by LPL, triglyceride metabolism and lipid homeostasis. Binds chylomicrons and phospholipid particles that contain APOA5. Binds high-density lipoprotein (HDL) and plays a role in the uptake of lipids from HDL. This is Glycosylphosphatidylinositol-anchored high density lipoprotein-binding protein 1 from Mus musculus (Mouse).